Here is a 348-residue protein sequence, read N- to C-terminus: VIP36-like protein (348 aa).

The first 38 residues, 1–38 (MAATLGPLGSWQQWRRCLLARDGSRMLLLLLLLGSGQG), serve as a signal peptide directing secretion. The Lumenal portion of the chain corresponds to 39 to 313 (PQQVGAGQTF…APLPPLSGLA (275 aa)). The L-type lectin-like domain maps to 49–274 (EYLKREHSLS…DVISLKLFEL (226 aa)). Residues Ser93 and Asp128 each contribute to the a carbohydrate site. Positions 159, 161, and 163 each coordinate Ca(2+). 161-163 (YPN) contributes to the a carbohydrate binding site. Asn181 carries N-linked (GlcNAc...) asparagine glycosylation. A carbohydrate is bound at residue His188. Asp191 is a Ca(2+) binding site. Residues Cys200 and Cys237 are joined by a disulfide bond. Position 258 to 260 (258 to 260 (GDL)) interacts with a carbohydrate. A helical transmembrane segment spans residues 314-334 (LFHIVFFSLVIFVFAIVIGII). Over 335–348 (LYNKWQEQSRKRFY) the chain is Cytoplasmic. The Endoplasmic reticulum retention signal signature appears at 344–346 (RKR).

It is found in the endoplasmic reticulum membrane. It localises to the golgi apparatus membrane. Functionally, may be involved in the regulation of export from the endoplasmic reticulum of a subset of glycoproteins. May function as a regulator of ERGIC-53. The protein is VIP36-like protein (LMAN2L) of Pongo abelii (Sumatran orangutan).